Here is a 162-residue protein sequence, read N- to C-terminus: MVAISEIKSTVDVTAANCLMLLSRVGQENVDGGDQKRVFTCKTCLKQFHSFQALGGHRASHKKPNNDALSSGLMKKVKTSSHPCPICGVEFPMGQALGGHMRRHRNESGAAGGALVTRALLPEPTVTTLKKSSSGKRVACLDLSLGMVDNLNLKLELGRTVY.

C2H2-type zinc fingers lie at residues 39-61 and 82-104; these read FTCK…RASH and HPCP…MRRH.

In terms of tissue distribution, expressed in roots, stems and flowers.

It localises to the nucleus. Functionally, transcriptional repressor involved in light acclimation, cold and oxidative stress responses. May regulate a collection of transcripts involved in response to high-light, cold and oxidative stress. This chain is Zinc finger protein ZAT12 (ZAT12), found in Arabidopsis thaliana (Mouse-ear cress).